The sequence spans 188 residues: MKLDIFAGQEKSELSMIEVARAILEERGRDNEVYFSDLVNDIQTFLGKSDADIRQALPFFYTDLNTDGSFIPLGDNKWGLRSWYAIDEIDEEIITLEDEEDGAPKRKKKRVNAFMDGDEDAIDYSDDDPEDEDFTEETSDVEYDEEDPDDEKSEVESYDSELNEIIPEDDIEEVEINEEDDEDDEEEE.

The HTH HARE-type domain occupies 14–83 (LSMIEVARAI…GDNKWGLRSW (70 aa)). The segment at 117–188 (GDEDAIDYSD…EDDEDDEEEE (72 aa)) is disordered.

It belongs to the RpoE family. As to quaternary structure, RNAP is composed of a core of 2 alpha, a beta and a beta' subunits. The core is associated with a delta subunit and one of several sigma factors.

Functionally, participates in both the initiation and recycling phases of transcription. In the presence of the delta subunit, RNAP displays an increased specificity of transcription, a decreased affinity for nucleic acids, and an increased efficiency of RNA synthesis because of enhanced recycling. The protein is Probable DNA-directed RNA polymerase subunit delta of Streptococcus uberis (strain ATCC BAA-854 / 0140J).